The chain runs to 130 residues: Small ribosomal subunit protein uS11 (130 aa).

This sequence belongs to the universal ribosomal protein uS11 family. Part of the 30S ribosomal subunit. Interacts with proteins S7 and S18. Binds to IF-3.

Located on the platform of the 30S subunit, it bridges several disparate RNA helices of the 16S rRNA. Forms part of the Shine-Dalgarno cleft in the 70S ribosome. In Helicobacter hepaticus (strain ATCC 51449 / 3B1), this protein is Small ribosomal subunit protein uS11.